The sequence spans 204 residues: Outer-membrane lipoprotein carrier protein (204 aa).

Residues 1 to 21 (MKKLLVACCVVSGMMSASVLA) form the signal peptide.

It belongs to the LolA family. In terms of assembly, monomer.

It is found in the periplasm. In terms of biological role, participates in the translocation of lipoproteins from the inner membrane to the outer membrane. Only forms a complex with a lipoprotein if the residue after the N-terminal Cys is not an aspartate (The Asp acts as a targeting signal to indicate that the lipoprotein should stay in the inner membrane). The sequence is that of Outer-membrane lipoprotein carrier protein from Edwardsiella ictaluri (strain 93-146).